Reading from the N-terminus, the 225-residue chain is ATP-dependent dethiobiotin synthetase BioD (225 aa).

Residue 12–17 (EIGKTY) coordinates ATP. Mg(2+) is bound at residue Thr-16. Lys-37 is a catalytic residue. Residue Ser-41 participates in substrate binding. ATP contacts are provided by residues Asp-55, 122–125 (EGVG), and 182–183 (SE). Residues Asp-55 and Glu-122 each coordinate Mg(2+).

This sequence belongs to the dethiobiotin synthetase family. In terms of assembly, homodimer. It depends on Mg(2+) as a cofactor.

It is found in the cytoplasm. It catalyses the reaction (7R,8S)-7,8-diammoniononanoate + CO2 + ATP = (4R,5S)-dethiobiotin + ADP + phosphate + 3 H(+). Its pathway is cofactor biosynthesis; biotin biosynthesis; biotin from 7,8-diaminononanoate: step 1/2. Its function is as follows. Catalyzes a mechanistically unusual reaction, the ATP-dependent insertion of CO2 between the N7 and N8 nitrogen atoms of 7,8-diaminopelargonic acid (DAPA, also called 7,8-diammoniononanoate) to form a ureido ring. This chain is ATP-dependent dethiobiotin synthetase BioD, found in Methylobacterium nodulans (strain LMG 21967 / CNCM I-2342 / ORS 2060).